The primary structure comprises 1770 residues: Transposon Ty2-DR2 Gag-Pol polyprotein (1770 aa).

Polar residues-rich tracts occupy residues 1 to 39 (MESQ…SASN) and 49 to 60 (KVNSQEETTPGT). 2 disordered regions span residues 1–89 (MESQ…QQHG) and 360–449 (HSEY…SNDE). An RNA-binding region spans residues 295-397 (ENNINVSDRL…SSKPRAAKAH (103 aa)). Over residues 369-381 (TSPNTTNTKVTTR) the composition is skewed to low complexity. Polar residues-rich tracts occupy residues 399–408 (IATSSKFSRV) and 415–435 (ESTV…GQQQ). Aspartate 457 acts as the For protease activity; shared with dimeric partner in catalysis. An integrase-type zinc finger-like region spans residues 579–636 (NVNKSKSVNKYPYPLIHRMLGHANFRSIQKSLKKNAVTYLKESDIEWSNASTYQCPDC). In terms of domain architecture, Integrase catalytic spans 656-831 (ESYEPFQYLH…AGLDITTILP (176 aa)). The Mg(2+) site is built by aspartate 667 and aspartate 732. Disordered regions lie at residues 1005 to 1038 (GGTI…MIDL), 1059 to 1135 (TEEP…KSSK), and 1171 to 1222 (SRQT…LEPP). Composition is skewed to polar residues over residues 1009 to 1024 (ESDT…FTAR) and 1065 to 1082 (QRNS…STPS). The Bipartite nuclear localization signal motif lies at 1193–1227 (KKRSLEDNETEIEVSRDTWNNKNMRSLEPPRSKKR). The 139-residue stretch at 1353–1491 (NDYYITQLDI…DILGLEIKYQ (139 aa)) folds into the Reverse transcriptase Ty1/copia-type domain. Residues aspartate 1361, aspartate 1442, aspartate 1443, aspartate 1625, glutamate 1667, and aspartate 1700 each contribute to the Mg(2+) site. Residues 1625-1767 (DASYGNQPYY…IKTFKLLTNK (143 aa)) enclose the RNase H Ty1/copia-type domain.

As to quaternary structure, the capsid protein forms a homotrimer, from which the VLPs are assembled. The protease is a homodimer, whose active site consists of two apposed aspartic acid residues. Post-translationally, initially, virus-like particles (VLPs) are composed of the structural unprocessed proteins Gag and Gag-Pol, and also contain the host initiator methionine tRNA (tRNA(i)-Met) which serves as a primer for minus-strand DNA synthesis, and a dimer of genomic Ty RNA. Processing of the polyproteins occurs within the particle and proceeds by an ordered pathway, called maturation. First, the protease (PR) is released by autocatalytic cleavage of the Gag-Pol polyprotein, and this cleavage is a prerequisite for subsequent processing at the remaining sites to release the mature structural and catalytic proteins. Maturation takes place prior to the RT reaction and is required to produce transposition-competent VLPs.

It is found in the cytoplasm. The protein resides in the nucleus. It catalyses the reaction DNA(n) + a 2'-deoxyribonucleoside 5'-triphosphate = DNA(n+1) + diphosphate. It carries out the reaction Endonucleolytic cleavage to 5'-phosphomonoester.. Functionally, capsid protein (CA) is the structural component of the virus-like particle (VLP), forming the shell that encapsulates the retrotransposons dimeric RNA genome. The particles are assembled from trimer-clustered units and there are holes in the capsid shells that allow for the diffusion of macromolecules. CA also has nucleocapsid-like chaperone activity, promoting primer tRNA(i)-Met annealing to the multipartite primer-binding site (PBS), dimerization of Ty2 RNA and initiation of reverse transcription. Its function is as follows. The aspartyl protease (PR) mediates the proteolytic cleavages of the Gag and Gag-Pol polyproteins after assembly of the VLP. Reverse transcriptase/ribonuclease H (RT) is a multifunctional enzyme that catalyzes the conversion of the retro-elements RNA genome into dsDNA within the VLP. The enzyme displays a DNA polymerase activity that can copy either DNA or RNA templates, and a ribonuclease H (RNase H) activity that cleaves the RNA strand of RNA-DNA heteroduplexes during plus-strand synthesis and hydrolyzes RNA primers. The conversion leads to a linear dsDNA copy of the retrotransposon that includes long terminal repeats (LTRs) at both ends. In terms of biological role, integrase (IN) targets the VLP to the nucleus, where a subparticle preintegration complex (PIC) containing at least integrase and the newly synthesized dsDNA copy of the retrotransposon must transit the nuclear membrane. Once in the nucleus, integrase performs the integration of the dsDNA into the host genome. This chain is Transposon Ty2-DR2 Gag-Pol polyprotein (TY2B-DR2), found in Saccharomyces cerevisiae (strain ATCC 204508 / S288c) (Baker's yeast).